Reading from the N-terminus, the 261-residue chain is Small ribosomal subunit protein eS4B (261 aa).

Ser-32 is subject to Phosphoserine. In terms of domain architecture, S4 RNA-binding spans 42–105 (LPLIVFLRNR…NENFRLVYDV (64 aa)). Lys-62 participates in a covalent cross-link: Glycyl lysine isopeptide (Lys-Gly) (interchain with G-Cter in ubiquitin). Thr-115 carries the post-translational modification Phosphothreonine. Residues Lys-134, Lys-161, Lys-168, Lys-174, Lys-179, Lys-211, and Lys-233 each participate in a glycyl lysine isopeptide (Lys-Gly) (interchain with G-Cter in ubiquitin) cross-link. Ser-247 carries the post-translational modification Phosphoserine.

It belongs to the eukaryotic ribosomal protein eS4 family. Component of the small ribosomal subunit (SSU). Mature yeast ribosomes consist of a small (40S) and a large (60S) subunit. The 40S small subunit contains 1 molecule of ribosomal RNA (18S rRNA) and 33 different proteins (encoded by 57 genes). The large 60S subunit contains 3 rRNA molecules (25S, 5.8S and 5S rRNA) and 46 different proteins (encoded by 81 genes).

It localises to the cytoplasm. Component of the ribosome, a large ribonucleoprotein complex responsible for the synthesis of proteins in the cell. The small ribosomal subunit (SSU) binds messenger RNAs (mRNAs) and translates the encoded message by selecting cognate aminoacyl-transfer RNA (tRNA) molecules. The large subunit (LSU) contains the ribosomal catalytic site termed the peptidyl transferase center (PTC), which catalyzes the formation of peptide bonds, thereby polymerizing the amino acids delivered by tRNAs into a polypeptide chain. The nascent polypeptides leave the ribosome through a tunnel in the LSU and interact with protein factors that function in enzymatic processing, targeting, and the membrane insertion of nascent chains at the exit of the ribosomal tunnel. This is Small ribosomal subunit protein eS4B from Saccharomyces cerevisiae (strain ATCC 204508 / S288c) (Baker's yeast).